The primary structure comprises 2159 residues: MTSLAHQLKRLALPQNDSSLLGRKEVVSVLFDPKDAASMDRSTFHALGCTGLEELMGIDAAFSEFQETLFSQGSLTLERSVQSKEVNKKLDKSISLFLTRLSPYFLLKPALKCIEWLLHRFHIHLYNQDSLIACVLPYHETKVFVRVIQLFKIEDPTHKWHWLHGIQKPGVPLARGTLLTHCYKDLGFMDFVCSMVTNSVKAYSELTRDGNCPQLRVIFSFYASTIVSALDAVEKITNSIIAKLLPFVQLGLKSNLSDYTAATYMIVCQMAVKVVMEAQLVDSLSVQLSRSLGRTPQLIREGLSCIIILLQNQKKGVIGQKTYGYLCAVPTLVSTLQSISTVHDISPLLSYLLPHLIHSVMTQNDEQQNEGLSDSTGLLQSVFQNLQLSSNLENTAAKLLLEEYVVCGNELPSDGISALNQRIQPTVRLFESRYPCALDMALENHVKNVSSDNEKNLLHQFISLTLSCGKYQILPESETSLMLSLNHPLPSVRNMAVDYLKEILNSEHNSFDEAFLKDALLERIKDDSPEVVLSALKALQHHMGLMDVEDTVSSLISLLHRIKPSADWCPVLKEAVRVLDDPRIIEGNPDLKAYISWELLPFLVMTRAAPECVELQMTSAITETTLISQHPLTQGWAKVLKAVLAKTSESDLLGVANEMLTTTLIKNLANMDHATKRNTLENVCDILSRQGSSVRDRAAFVVFSSALLQSLQSMTESQHLHTAQSVYKLLEPLLLQAYTIQPEQVSDQPADECLPVCVALGEFLQKISCGLSAEQEQGLLLLSLLRLFITTLKCPDSTFKGEPWWNPEKMETTTCCYLRLLCRLFDVVISGASQGPLAPCFRSLMQPLLQVHLNEPMVLFKFLSLSWGYNSNLGDQLDCRVSAILQTQALYVGKAFLSSQPVKTLNLLASDSSPVVPSLLVCVCSGVCEVRRAAIAVLQCLSGLVSSPYHPLVEKLLKSSEEIIADSSYLTQALSKFYEEAVSRKDKNKKLASVEQLLQCLQSPFCPSYTSKTLLRALQDVHGEPVLSVLLPAVERLLEQCAPDSCTFLPDEALLLQLLLSKFSEMSAPLLVKDPRCLEVFIRALHTSARPYPTIPSFQITALEQITKPFFTAIGDEKIQQKILSILFDLLVGNKSPACAQSINSVFKTIAVDCELVANELIPADKQRVTATVQQTRRSKMRKTQDTSGAVPEESVVSWPRVTLILELLQHKKKLKRAQYLVPALFNLLSRCLEPAAAEQENIEYTKQLILICLLNVCQKLSPEGGPISKDVLEEDKFNMELVVQCVRVSEMPQTHHHALLLLGALAGIFPEKVLHNIMPIFTFMGANIMRLDDTYSFQVINKTVQAVIPALIKAHEGGSSQSEGHMETVVAQIIHVFVDALPHVPEHRRLPILSQLMSTLGPSRFLWVLMLLLFKQHVTQTSAGATGAEKEAVVERDQDFWILVCCEFEVKEQLTSLIKILQYLMTLPQDREEAPEKKKPRGRSAVKKDETVSDLIFSVETHSGKDLRHFKFISISFMAQLLASDGFVGKVADCEDITESTLQALQQDLLVEVLRYIQAVARCVEDNADKPTAKFWRALLSKSYDTLDKVNALLPMDTFITVMRGLVGNQLASVRRKAMELLNNKLQQRTKWLKEQITALLELIGTLLSIVGRSHRQVTAQEEEELAINRQTALYSLKLLCRNFGSDHKEEFVPVLNKAVELVADKDEEKNVMGSALLCVAEVTSTLKALAIPQLHRLMPAVLDTLKERKDLLNNEIYLLSAVTALQRASETLPHFISPYLLDTILQVTRLTLLARRLTSCPQLSVRLASLSSTLATKLPPRVLIPTITKCYCSMVDAQQNRLSPLMNILKEHISHMDKDQLNNHQSELTSFFLSALDFRAQHCQGDLKKTAEIEGCVIDCLLVMIMKLSEVTFRPLFFKLFDWSKIDGASKDRLLTFYRLADRIADKLKGLFVLFAGQLVKPFSDLLHQLNISHTDKAFFDSEDESDDDSDEEADDNVTKSSLLLQYVLDCLHKIFLYDTQHFLSKERADALLCPLVDQLENMLGGEETYKSRITTHLVPCIAQFAVAMRDDSQWKVLNYQILLKTRHSSPKVRFSALVMLLELAGKLRENYMVLLPETIPFLAELMEDECEEVEHQVQKVIQEMETILGEPLQSYF.

HEAT repeat units follow at residues S346–Q384, N509–V548, A909–S947, E1024–K1062, Q1219–K1260, L1594–K1632, I1733–T1773, and M2115–E2153.

It belongs to the HEATR1/UTP10 family. In terms of assembly, part of the small subunit (SSU) processome, composed of more than 70 proteins and the RNA chaperone small nucleolar RNA (snoRNA) U3. Interacts with MYC; the interaction is required for localization of MYC to the nucleolus.

It is found in the nucleus. The protein localises to the nucleolus. Functionally, ribosome biogenesis factor; required for recruitment of Myc to nucleoli. Involved in nucleolar processing of pre-18S ribosomal RNA. Required for optimal pre-ribosomal RNA transcription by RNA polymerase I. Part of the small subunit (SSU) processome, first precursor of the small eukaryotic ribosomal subunit. During the assembly of the SSU processome in the nucleolus, many ribosome biogenesis factors, an RNA chaperone and ribosomal proteins associate with the nascent pre-rRNA and work in concert to generate RNA folding, modifications, rearrangements and cleavage as well as targeted degradation of pre-ribosomal RNA by the RNA exosome. Involved in neuronal-lineage cell proliferation. Required for cell survival in the CNS through its role in rRNA synthesis and processing. The sequence is that of HEAT repeat-containing protein 1 (heatr1) from Danio rerio (Zebrafish).